The chain runs to 180 residues: Large ribosomal subunit protein uL5 (180 aa).

The protein belongs to the universal ribosomal protein uL5 family. As to quaternary structure, part of the 50S ribosomal subunit; part of the 5S rRNA/L5/L18/L25 subcomplex. Contacts the 5S rRNA and the P site tRNA. Forms a bridge to the 30S subunit in the 70S ribosome.

Functionally, this is one of the proteins that bind and probably mediate the attachment of the 5S RNA into the large ribosomal subunit, where it forms part of the central protuberance. In the 70S ribosome it contacts protein S13 of the 30S subunit (bridge B1b), connecting the 2 subunits; this bridge is implicated in subunit movement. Contacts the P site tRNA; the 5S rRNA and some of its associated proteins might help stabilize positioning of ribosome-bound tRNAs. In Chloroflexus aurantiacus (strain ATCC 29364 / DSM 637 / Y-400-fl), this protein is Large ribosomal subunit protein uL5.